The sequence spans 544 residues: Chaperonin GroEL (544 aa).

ATP is bound by residues 29–32 (TLGP), 86–90 (DGTTT), Gly-413, 476–478 (NAA), and Asp-492.

The protein belongs to the chaperonin (HSP60) family. As to quaternary structure, forms a cylinder of 14 subunits composed of two heptameric rings stacked back-to-back. Interacts with the co-chaperonin GroES.

It localises to the cytoplasm. The protein resides in the secreted. It catalyses the reaction ATP + H2O + a folded polypeptide = ADP + phosphate + an unfolded polypeptide.. Together with its co-chaperonin GroES, plays an essential role in assisting protein folding. The GroEL-GroES system forms a nano-cage that allows encapsulation of the non-native substrate proteins and provides a physical environment optimized to promote and accelerate protein folding. This chain is Chaperonin GroEL, found in Bacillus subtilis (strain 168).